The chain runs to 146 residues: Angiogenin (146 aa).

The N-terminal stretch at 1 to 24 is a signal peptide; it reads MVMGLGLFLLVFMLGLGLTPPTLA. Residue Gln25 is modified to Pyrrolidone carboxylic acid. The active-site Proton acceptor is His37. Arg45 contacts tRNA. 3 disulfides stabilise this stretch: Cys50-Cys105, Cys63-Cys116, and Cys81-Cys131. The short motif at 55-59 is the Nucleolar localization signal element; it reads RRRGL. 2 residues coordinate tRNA: Cys105 and Ile127. His138 functions as the Proton donor in the catalytic mechanism.

The protein belongs to the pancreatic ribonuclease family. Homodimer. Interacts with RNH1; inhibiting ANG ribonuclease activity. Interacts with PCNA.

It localises to the secreted. The protein localises to the nucleus. Its subcellular location is the nucleolus. The protein resides in the cytoplasm. It is found in the stress granule. Its activity is regulated as follows. Has weak tRNA ribonuclease activity by itself due to partial autoinhibition by its C-terminus, which folds into a short alpha-helix that partially occludes the substrate-binding site. In absence of stress, the ribonuclease activity is inhibited by RNH1 in the cytoplasm. In response to stress, dissociates from RNH1 in the cytoplasm and associates with cytoplasmic ribosomes with vacant A-sites: ribosomes directly activate the tRNA ribonuclease activity of ANG by refolding the C-terminal alpha-helix. In response to stress, the angiogenic activity of ANG is inhibited by RNH1 in the nucleus. In terms of biological role, secreted ribonuclease that can either promote or restrict cell proliferation of target cells, depending on the context. Endocytosed in target cells via its receptor PLXNB2 and translocates to the cytoplasm or nucleus. Under stress conditions, localizes to the cytoplasm and promotes the assembly of stress granules (SGs): specifically cleaves a subset of tRNAs within anticodon loops to produce tRNA-derived stress-induced fragments (tiRNAs), resulting in translation repression and inhibition of cell proliferation. tiRNas also prevent formation of apoptosome, thereby promoting cell survival. Preferentially cleaves RNAs between a pyrimidine and an adenosine residue, suggesting that it cleaves the anticodon loop of tRNA(Ala) (32-UUAGCAU-38) after positions 33 and 36. Cleaves a subset of tRNAs, including tRNA(Ala), tRNA(Glu), tRNA(Gly), tRNA(Lys), tRNA(Val), tRNA(His), tRNA(Asp) and tRNA(Sec). Under growth conditions and in differentiated cells, translocates to the nucleus and stimulates ribosomal RNA (rRNA) transcription, including that containing the initiation site sequences of 45S rRNA, thereby promoting cell growth and proliferation. Angiogenin induces vascularization of normal and malignant tissues via its ability to promote rRNA transcription. Involved in hematopoietic stem and progenitor cell (HSPC) growth and survival by promoting rRNA transcription in growth conditions and inhibiting translation in response to stress, respectively. Mediates the crosstalk between myeloid and intestinal epithelial cells to protect the intestinal epithelial barrier integrity: secreted by myeloid cells and promotes intestinal epithelial cells proliferation and survival. Also mediates osteoclast-endothelial cell crosstalk in growing bone: produced by osteoclasts and protects the neighboring vascular cells against senescence by promoting rRNA transcription. This Trachypithecus francoisi (Francois' leaf monkey) protein is Angiogenin (ANG).